Here is a 136-residue protein sequence, read N- to C-terminus: Regulator of nucleoside diphosphate kinase (136 aa).

It belongs to the Rnk family. In terms of assembly, interacts with the RNA polymerase.

May act as an anti-Gre factor. This chain is Regulator of nucleoside diphosphate kinase, found in Escherichia coli O6:H1 (strain CFT073 / ATCC 700928 / UPEC).